The primary structure comprises 238 residues: Ribonuclease PH (238 aa).

Phosphate contacts are provided by residues Arg-86 and 124 to 126 (GTR).

Belongs to the RNase PH family. In terms of assembly, homohexameric ring arranged as a trimer of dimers.

It catalyses the reaction tRNA(n+1) + phosphate = tRNA(n) + a ribonucleoside 5'-diphosphate. Phosphorolytic 3'-5' exoribonuclease that plays an important role in tRNA 3'-end maturation. Removes nucleotide residues following the 3'-CCA terminus of tRNAs; can also add nucleotides to the ends of RNA molecules by using nucleoside diphosphates as substrates, but this may not be physiologically important. Probably plays a role in initiation of 16S rRNA degradation (leading to ribosome degradation) during starvation. This is Ribonuclease PH from Chromobacterium violaceum (strain ATCC 12472 / DSM 30191 / JCM 1249 / CCUG 213 / NBRC 12614 / NCIMB 9131 / NCTC 9757 / MK).